The following is a 299-amino-acid chain: GTPase Era (299 aa).

Residues 5-175 (RSGFVCLVGR…IDVLAAALPP (171 aa)) form the Era-type G domain. The interval 13-20 (GRPNTGKS) is G1. 13 to 20 (GRPNTGKS) contributes to the GTP binding site. Positions 39 to 43 (QTTRH) are G2. Positions 60–63 (DTPG) are G3. Residues 60 to 64 (DTPGL) and 124 to 127 (TKID) contribute to the GTP site. A G4 region spans residues 124 to 127 (TKID). The interval 154–156 (VSA) is G5. Residues 206-285 (VRDELPHSLA…YLDLRVKVAK (80 aa)) enclose the KH type-2 domain.

Belongs to the TRAFAC class TrmE-Era-EngA-EngB-Septin-like GTPase superfamily. Era GTPase family. As to quaternary structure, monomer.

Its subcellular location is the cell envelope. It is found in the secreted. The protein localises to the cell wall. Functionally, exhibits GTPase activity. Binds RNA but is probably not involved in ribosome assembly in mycobacteria. The protein is GTPase Era of Mycolicibacterium paratuberculosis (strain ATCC BAA-968 / K-10) (Mycobacterium paratuberculosis).